The following is a 431-amino-acid chain: Mediator of RNA polymerase II transcription subunit 2 (431 aa).

S6 bears the Phosphoserine mark. A compositionally biased stretch (basic and acidic residues) spans 105-140; sequence GKEKEKEREEAEKKRAEQENMRKVREQEELKKRQEL. Residues 105-178 are disordered; that stretch reads GKEKEKEREE…ANTTDANGSK (74 aa). The span at 143 to 152 shows a compositional bias: low complexity; sequence ASQQQQLQQN. Positions 162 to 178 are enriched in polar residues; it reads NFSTTAPANTTDANGSK. S208 is subject to Phosphoserine; by CDK8. The interval 284-399 is disordered; it reads NNINSTKNGK…GDNPPPADNG (116 aa). The span at 304 to 313 shows a compositional bias: basic and acidic residues; the sequence is NGDEKNKNNN. Over residues 318-365 the composition is skewed to low complexity; sequence NNNNSSEKNNNNNNNNNNNNDDNGNNNNNNSGNDNNNTTNNDSNNKNN. The segment covering 366-387 has biased composition (polar residues); the sequence is SITTGNDNENIVNNDLPTTVVS.

It belongs to the mediator complex subunit 2 family. In terms of assembly, component of the Mediator complex, which is composed of at least 21 subunits that form three structurally distinct submodules. The Mediator head module contains MED6, MED8, MED11, SRB4/MED17, SRB5/MED18, ROX3/MED19, SRB2/MED20 and SRB6/MED22, the middle module contains MED1, MED4, NUT1/MED5, MED7, CSE2/MED9, NUT2/MED10, SRB7/MED21 and SOH1/MED31, and the tail module contains MED2, PGD1/MED3, RGR1/MED14, GAL11/MED15 and SIN4/MED16. The head and the middle modules interact directly with RNA polymerase II, whereas the elongated tail module interacts with gene-specific regulatory proteins.

It localises to the nucleus. Component of the Mediator complex, a coactivator involved in the regulated transcription of nearly all RNA polymerase II-dependent genes. Mediator functions as a bridge to convey information from gene-specific regulatory proteins to the basal RNA polymerase II transcription machinery. The Mediator complex, having a compact conformation in its free form, is recruited to promoters by direct interactions with regulatory proteins and serves for the assembly of a functional preinitiation complex with RNA polymerase II and the general transcription factors. The Mediator complex unfolds to an extended conformation and partially surrounds RNA polymerase II, specifically interacting with the unphosphorylated form of the C-terminal domain (CTD) of RNA polymerase II. The Mediator complex dissociates from the RNA polymerase II holoenzyme and stays at the promoter when transcriptional elongation begins. The polypeptide is Mediator of RNA polymerase II transcription subunit 2 (MED2) (Saccharomyces cerevisiae (strain ATCC 204508 / S288c) (Baker's yeast)).